The primary structure comprises 199 residues: Recombination protein RecR (199 aa).

The C4-type zinc-finger motif lies at cysteine 58 to cysteine 73. A Toprim domain is found at aspartate 81–proline 176.

Belongs to the RecR family.

May play a role in DNA repair. It seems to be involved in an RecBC-independent recombinational process of DNA repair. It may act with RecF and RecO. This chain is Recombination protein RecR, found in Desulfatibacillum aliphaticivorans.